Here is a 502-residue protein sequence, read N- to C-terminus: tRNA-2-methylthio-N(6)-dimethylallyladenosine synthase (502 aa).

The MTTase N-terminal domain occupies 12-129 (RTYQVRTYGC…LPVLLERARH (118 aa)). Positions 21, 58, 92, 166, 170, and 173 each coordinate [4Fe-4S] cluster. The Radical SAM core domain occupies 152-383 (RESTYAGWVS…ACVEEITWAE (232 aa)). Residues 385–455 (RRLVGETVEV…PHHLNADGEP (71 aa)) form the TRAM domain. The segment at 451-502 (ADGEPLAHRRTPAGDAAEAGRRPRTAGVSLGLPTVGAPPSPVPPAASSACAC) is disordered.

Belongs to the methylthiotransferase family. MiaB subfamily. In terms of assembly, monomer. It depends on [4Fe-4S] cluster as a cofactor.

The protein localises to the cytoplasm. It carries out the reaction N(6)-dimethylallyladenosine(37) in tRNA + (sulfur carrier)-SH + AH2 + 2 S-adenosyl-L-methionine = 2-methylsulfanyl-N(6)-dimethylallyladenosine(37) in tRNA + (sulfur carrier)-H + 5'-deoxyadenosine + L-methionine + A + S-adenosyl-L-homocysteine + 2 H(+). Catalyzes the methylthiolation of N6-(dimethylallyl)adenosine (i(6)A), leading to the formation of 2-methylthio-N6-(dimethylallyl)adenosine (ms(2)i(6)A) at position 37 in tRNAs that read codons beginning with uridine. The protein is tRNA-2-methylthio-N(6)-dimethylallyladenosine synthase of Salinispora arenicola (strain CNS-205).